Reading from the N-terminus, the 1125-residue chain is Exportin-6 (1125 aa).

Position 2 is an N-acetylalanine (Ala2). Residues Ile31–Ala97 enclose the Importin N-terminal domain. Phosphoserine is present on Ser199. Phosphothreonine is present on residues Thr201 and Thr204. Residues Ser208 and Ser224 each carry the phosphoserine modification.

This sequence belongs to the exportin family. In terms of assembly, found in a complex with XPO6, Ran, ACTB and PFN1. Interacts with ACTB. Interacts with ACTB in a RanGTP-dependent manner.

It is found in the nucleus. The protein resides in the cytoplasm. In terms of biological role, mediates the nuclear export of actin and profilin-actin complexes in somatic cells. The chain is Exportin-6 (Xpo6) from Mus musculus (Mouse).